A 164-amino-acid chain; its full sequence is MGQKKTMGTERSRGGKRGPQPGAERPEEPGATFSKKPPEGARAPRCLSRPTAPKSGACLARRRPPGSPCSIRDAPFHTGDDRFLARENFPNVLQPLPRMFAVQQAADFESQCPRRWDSRKRPSEGLPSAGWGRWRGRPIHLGLWVSGSVRRKVSGSHVSRSLHL.

Positions 1–77 are disordered; that stretch reads MGQKKTMGTE…PCSIRDAPFH (77 aa).

This is an uncharacterized protein from Homo sapiens (Human).